Reading from the N-terminus, the 98-residue chain is NADH-ubiquinone oxidoreductase chain 4L (98 aa).

Transmembrane regions (helical) follow at residues 1–21, 29–49, and 61–81; these read MPYI…GTLM, SLLC…LLSL, and LILL…LIMI.

The protein belongs to the complex I subunit 4L family. As to quaternary structure, core subunit of respiratory chain NADH dehydrogenase (Complex I) which is composed of 45 different subunits.

It is found in the mitochondrion inner membrane. It carries out the reaction a ubiquinone + NADH + 5 H(+)(in) = a ubiquinol + NAD(+) + 4 H(+)(out). Functionally, core subunit of the mitochondrial membrane respiratory chain NADH dehydrogenase (Complex I) which catalyzes electron transfer from NADH through the respiratory chain, using ubiquinone as an electron acceptor. Part of the enzyme membrane arm which is embedded in the lipid bilayer and involved in proton translocation. This Mammuthus primigenius (Siberian woolly mammoth) protein is NADH-ubiquinone oxidoreductase chain 4L (MT-ND4L).